The sequence spans 230 residues: Potassium/proton antiporter CemA (230 aa).

4 consecutive transmembrane segments (helical) span residues 7–27 (LPSL…SFSF), 106–126 (IILH…FFFL), 145–165 (LNDS…VGFH), and 181–201 (LGWA…PVIL).

Belongs to the CemA family.

Its subcellular location is the plastid. It is found in the chloroplast inner membrane. The catalysed reaction is K(+)(in) + H(+)(out) = K(+)(out) + H(+)(in). Its function is as follows. Contributes to K(+)/H(+) antiport activity by supporting proton efflux to control proton extrusion and homeostasis in chloroplasts in a light-dependent manner to modulate photosynthesis. Prevents excessive induction of non-photochemical quenching (NPQ) under continuous-light conditions. Indirectly promotes efficient inorganic carbon uptake into chloroplasts. In Lolium perenne (Perennial ryegrass), this protein is Potassium/proton antiporter CemA.